A 352-amino-acid chain; its full sequence is Selenide, water dikinase (352 aa).

Cys-23 is an active-site residue. Residues Lys-26 and 54 to 56 (SRD) contribute to the ATP site. Asp-57 lines the Mg(2+) pocket. ATP-binding positions include Asp-74, Asp-97, and 145–147 (GHS). Asp-97 serves as a coordination point for Mg(2+). A Mg(2+)-binding site is contributed by Asp-233.

Belongs to the selenophosphate synthase 1 family. Class I subfamily. In terms of assembly, homodimer. The cofactor is Mg(2+).

It carries out the reaction hydrogenselenide + ATP + H2O = selenophosphate + AMP + phosphate + 2 H(+). Synthesizes selenophosphate from selenide and ATP. This is Selenide, water dikinase from Shewanella baltica (strain OS223).